The following is a 236-amino-acid chain: uncharacterized protein (236 aa).

D22, N49, and K82 together coordinate NADP(+). Residues S100 and Y114 each act as proton donor in the active site. The NADP(+) site is built by Y114 and K118. K118 (lowers pKa of active site Tyr) is an active-site residue.

The protein belongs to the short-chain dehydrogenases/reductases (SDR) family.

Its subcellular location is the cytoplasm. It is found in the nucleus. This is an uncharacterized protein from Schizosaccharomyces pombe (strain 972 / ATCC 24843) (Fission yeast).